The chain runs to 493 residues: Ribose import ATP-binding protein RbsA (493 aa).

2 consecutive ABC transporter domains span residues 3 to 239 and 252 to 493; these read IKMK…VGRE and GRVV…TGGR. 35–42 is an ATP binding site; that stretch reads GENGAGKS.

The protein belongs to the ABC transporter superfamily. Ribose importer (TC 3.A.1.2.1) family. As to quaternary structure, the complex is composed of an ATP-binding protein (RbsA), two transmembrane proteins (RbsC) and a solute-binding protein (RbsB).

The protein localises to the cell membrane. It carries out the reaction D-ribose(out) + ATP + H2O = D-ribose(in) + ADP + phosphate + H(+). In terms of biological role, part of the ABC transporter complex RbsABC involved in ribose import. Responsible for energy coupling to the transport system. In Bacillus licheniformis (strain ATCC 14580 / DSM 13 / JCM 2505 / CCUG 7422 / NBRC 12200 / NCIMB 9375 / NCTC 10341 / NRRL NRS-1264 / Gibson 46), this protein is Ribose import ATP-binding protein RbsA.